The sequence spans 962 residues: Phagocyte signaling-impaired protein (962 aa).

TPR repeat units follow at residues 45 to 78 (LCAR…KPTD), 79 to 112 (DSTL…NPGN), and 523 to 560 (QIQL…FTNS). Residues 856 to 880 (TKVKKKQGDNKTQDTPQPVSEKERS) are disordered.

It belongs to the MDM20/NAA25 family. In terms of assembly, component of the N-terminal acetyltransferase B (NatB) complex.

It is found in the lysosome. Its function is as follows. Non-catalytic subunit of the NatB complex which catalyzes acetylation of the N-terminal methionine residues of proteins beginning with Met-Asp or Met-Glu. Has 2 roles in the larval immune response: required both for the phagocytic degradation of internalized bacteria and for the induction of Defensin in the fat body. Within the phagocytic blood cells, has a role in detection of infection and activation of the humoral immune response. The sequence is that of Phagocyte signaling-impaired protein from Drosophila pseudoobscura pseudoobscura (Fruit fly).